Consider the following 533-residue polypeptide: D-3-phosphoglycerate dehydrogenase (533 aa).

Alanine 2 is modified (N-acetylalanine). Serine 14 bears the Phosphoserine mark. N6-acetyllysine; alternate is present on lysine 21. A Glycyl lysine isopeptide (Lys-Gly) (interchain with G-Cter in SUMO1); alternate cross-link involves residue lysine 21. Residue lysine 21 forms a Glycyl lysine isopeptide (Lys-Gly) (interchain with G-Cter in SUMO2); alternate linkage. Position 58 is an N6-acetyllysine (lysine 58). NAD(+) is bound by residues threonine 78, 155 to 156 (RI), aspartate 175, threonine 207, 234 to 236 (CAR), and aspartate 260. Threonine 78 is subject to Phosphothreonine. Residue arginine 236 is part of the active site. Glutamate 265 is a catalytic residue. Histidine 283 functions as the Proton donor in the catalytic mechanism. 283 to 286 (HLGA) serves as a coordination point for NAD(+).

It belongs to the D-isomer specific 2-hydroxyacid dehydrogenase family. As to quaternary structure, homotetramer. In terms of tissue distribution, liver, kidney, brain, testis.

The enzyme catalyses (2R)-3-phosphoglycerate + NAD(+) = 3-phosphooxypyruvate + NADH + H(+). The protein operates within amino-acid biosynthesis; L-serine biosynthesis; L-serine from 3-phospho-D-glycerate: step 1/3. In terms of biological role, catalyzes the reversible oxidation of 3-phospho-D-glycerate to 3-phosphonooxypyruvate, the first step of the phosphorylated L-serine biosynthesis pathway. Does not catalyze the reversible oxidation of 2-hydroxyglutarate to 2-oxoglutarate and the reversible oxidation of (S)-malate to oxaloacetate. The chain is D-3-phosphoglycerate dehydrogenase (Phgdh) from Rattus norvegicus (Rat).